The following is a 223-amino-acid chain: Deoxyribose-phosphate aldolase (223 aa).

Residue Asp-89 is the Proton donor/acceptor of the active site. Lys-152 acts as the Schiff-base intermediate with acetaldehyde in catalysis. Lys-181 functions as the Proton donor/acceptor in the catalytic mechanism.

It belongs to the DeoC/FbaB aldolase family. DeoC type 1 subfamily.

The protein resides in the cytoplasm. It catalyses the reaction 2-deoxy-D-ribose 5-phosphate = D-glyceraldehyde 3-phosphate + acetaldehyde. Its pathway is carbohydrate degradation; 2-deoxy-D-ribose 1-phosphate degradation; D-glyceraldehyde 3-phosphate and acetaldehyde from 2-deoxy-alpha-D-ribose 1-phosphate: step 2/2. Functionally, catalyzes a reversible aldol reaction between acetaldehyde and D-glyceraldehyde 3-phosphate to generate 2-deoxy-D-ribose 5-phosphate. The polypeptide is Deoxyribose-phosphate aldolase (Bacillus cereus (strain ATCC 10987 / NRS 248)).